A 74-amino-acid polypeptide reads, in one-letter code: Acyl carrier protein (74 aa).

Residues 1–73 form the Carrier domain; that stretch reads MAVFEKVQEI…DLVAYVEEKT (73 aa). Ser-35 is modified (O-(pantetheine 4'-phosphoryl)serine).

Belongs to the acyl carrier protein (ACP) family. 4'-phosphopantetheine is transferred from CoA to a specific serine of apo-ACP by AcpS. This modification is essential for activity because fatty acids are bound in thioester linkage to the sulfhydryl of the prosthetic group.

It localises to the cytoplasm. Its pathway is lipid metabolism; fatty acid biosynthesis. Its function is as follows. Carrier of the growing fatty acid chain in fatty acid biosynthesis. The protein is Acyl carrier protein of Streptococcus thermophilus (strain CNRZ 1066).